The sequence spans 1050 residues: Probable efflux pump membrane transporter TtgB (1050 aa).

12 consecutive transmembrane segments (helical) span residues 10–30, 339–359, 370–390, 393–413, 440–460, 472–492, 539–559, 871–891, 893–913, 923–943, 972–992, and 1004–1024; these read IFAWVIALVIMLVGALSILKL, GVIHTLIEAVVLVFLVMYLFL, MTVPVVLLGTFGILAAAGFSI, LTMFAMVLAIGLLVDDAIVVV, GALVGIALVLSAVLLPMAFFG, ITIVSAMGLSVLVALIFTPAL, VPFLLAYALIVVGMIWLFARI, MPALFALSVLFVFLCLAALYE, WSIPIAVVLVVPLGIIGALIA, VYFLVGLLTTIGLAAKNAILI, IIMTSLAFILGVVPLTIASGA, and VIGGMISATVLAIFWVPLFFV.

It belongs to the resistance-nodulation-cell division (RND) (TC 2.A.6) family.

The protein resides in the cell inner membrane. Functionally, probable membrane transporter component of the TtgABC efflux pump with unknown specificity. This is Probable efflux pump membrane transporter TtgB (ttgB) from Pseudomonas putida (strain ATCC 47054 / DSM 6125 / CFBP 8728 / NCIMB 11950 / KT2440).